Reading from the N-terminus, the 582-residue chain is Phosphoribosylaminoimidazole carboxylase (582 aa).

The ATP-grasp domain maps to Lys114–Leu305. An ATP-binding site is contributed by Ala143–Ala200.

The protein in the C-terminal section; belongs to the AIR carboxylase family. Class I subfamily.

It catalyses the reaction 5-amino-1-(5-phospho-D-ribosyl)imidazole-4-carboxylate + H(+) = 5-amino-1-(5-phospho-beta-D-ribosyl)imidazole + CO2. The protein operates within purine metabolism; IMP biosynthesis via de novo pathway; 5-amino-1-(5-phospho-D-ribosyl)imidazole-4-carboxylate from 5-amino-1-(5-phospho-D-ribosyl)imidazole (carboxylase route): step 1/1. This is Phosphoribosylaminoimidazole carboxylase (ADE2) from Cryptococcus neoformans var. neoformans serotype D (strain JEC21 / ATCC MYA-565) (Filobasidiella neoformans).